The following is an 877-amino-acid chain: MAAERYNPRVAEAHWQKVWEENRTFETDNSDSREKYYVLEMFPYPSGRIHMGHVRNYAMGDVVARYKRAKGFNVLHPMGWDAFGMPAENAAMQNKVHPKEWTYQNIATMKRQLKSMGLSLDWSREFATCDVEYYHRQQMLFIDLYEKGLVTRKTSKVNWDPVDNTVLANEQVVDGRGWRSGALVEQRELTQWFFKITDFSEELLAGLDTLDQWPEKVRLMQRNWIGKSEGLQVRFALAAGTAPAGFSEVEVYTTRPDTLFGAAFVAISADHPLAKKLSEGNAALSSFIEECHQQGTSLAALETAEKKGFDTGIKVKHPFDDNWELPVYVANFVLMEYGTGAVFGCPAHDQRDLDFANKYKLKVTPVVLPKGEDAASFSIGETAYTDDGVMINSRFLDGMTPEAAFNEVASRLEKTDLVGRPQAVRKVQFRLRDWGISRQRYWGCPIPMIHCESCGVNPVPRADLPVKLPDDVEFDRPGNPLDRHATWRHVKCPKCGGDARRETDTMDTFVDSSWYYTRFTAPWENEPTDRKAADHWLPVDQYIGGIEHAILHLLYSRFFTRAMKVAGHVGVDEPFKGLFTQGMVVHETYKANGQWVSPADIRIEEIDGKRVATMLDSGAPVEIGSIEKMSKSKKNVVDPDDIIASYGADTARWFVLSDSPPERDVIWTEAGAEGAHRFVQRIWRLVAEAAPALKDVAPKAGTQGEALGVSKAVHKAVKAVGDDIEKLAFNRGVARLYELVNTLSGALQQAADGKADAEMKGALREATEMLVLMTAPMMPHLAEQCLAELGGKVAGKETLVARAPWPVFDPALVVENEIVLPVQINGKKRGDLTIARDADQASIQQAVLELDFVKAALNGGSPKKIIVVPQRIVNVVA.

The short motif at 43–53 (PYPSGRIHMGH) is the 'HIGH' region element. Residues 628 to 632 (KMSKS) carry the 'KMSKS' region motif. ATP is bound at residue Lys-631.

Belongs to the class-I aminoacyl-tRNA synthetase family.

The protein localises to the cytoplasm. The catalysed reaction is tRNA(Leu) + L-leucine + ATP = L-leucyl-tRNA(Leu) + AMP + diphosphate. The chain is Leucine--tRNA ligase from Brucella abortus biovar 1 (strain 9-941).